The following is a 170-amino-acid chain: Peptide methionine sulfoxide reductase MsrA (170 aa).

Cysteine 13 is a catalytic residue.

The protein belongs to the MsrA Met sulfoxide reductase family.

The catalysed reaction is L-methionyl-[protein] + [thioredoxin]-disulfide + H2O = L-methionyl-(S)-S-oxide-[protein] + [thioredoxin]-dithiol. It carries out the reaction [thioredoxin]-disulfide + L-methionine + H2O = L-methionine (S)-S-oxide + [thioredoxin]-dithiol. In terms of biological role, has an important function as a repair enzyme for proteins that have been inactivated by oxidation. Catalyzes the reversible oxidation-reduction of methionine sulfoxide in proteins to methionine. The sequence is that of Peptide methionine sulfoxide reductase MsrA from Nocardia farcinica (strain IFM 10152).